We begin with the raw amino-acid sequence, 118 residues long: uncharacterized protein (118 aa).

3 helical membrane passes run 22-44 (IIASIVGAVIIAAAISALLFSIA), 54-71 (LSPLVYSIVSLAVIPVLR), and 78-99 (PILSLLTAFSIPILFLSGVEWL).

The protein resides in the cell membrane. This is an uncharacterized protein from Archaeoglobus fulgidus (strain ATCC 49558 / DSM 4304 / JCM 9628 / NBRC 100126 / VC-16).